A 326-amino-acid polypeptide reads, in one-letter code: tRNA-modifying protein YgfZ (326 aa).

Positions 27 and 189 each coordinate folate.

This sequence belongs to the tRNA-modifying YgfZ family.

It localises to the cytoplasm. Its function is as follows. Folate-binding protein involved in regulating the level of ATP-DnaA and in the modification of some tRNAs. It is probably a key factor in regulatory networks that act via tRNA modification, such as initiation of chromosomal replication. In Escherichia fergusonii (strain ATCC 35469 / DSM 13698 / CCUG 18766 / IAM 14443 / JCM 21226 / LMG 7866 / NBRC 102419 / NCTC 12128 / CDC 0568-73), this protein is tRNA-modifying protein YgfZ.